We begin with the raw amino-acid sequence, 303 residues long: Major fimbrium anchoring subunit FimB (303 aa).

The first 22 residues, 1–22 (MNDAKKYIVSVLILLVAGMFGG), serve as a signal peptide directing secretion. Residue Cys23 is the site of N-palmitoyl cysteine attachment. The S-diacylglycerol cysteine moiety is linked to residue Cys23.

The protein belongs to the bacteroidetes fimbrillin superfamily. FimB/Mfa2 family. FimB is not part of the fimbrium itself, but anchors the fimbrium in the outer membrane. Linear, head-to-tail oligomerization of fimbrial subunits mediates assembly of the fimbrium stalk, while the minor components FimC, FimD and FimE probably form the fimbrium tip. The anchoring subunit FimB limits fimbrium length and is important for solid fimbrium attachment to the outer membrane. In its absence, the major fimbriae become very long and are easily detached from the membrane.

The protein resides in the cell outer membrane. Anchoring subunit of the major fimbriae. Regulates fimbrial length. These filamentous pili are attached to the cell surface; they mediate biofilm formation, adhesion onto host cells and onto other bacteria that are part of the oral microbiome. Fimbriae of P.gingivalis are major virulence factors. The sequence is that of Major fimbrium anchoring subunit FimB from Porphyromonas gingivalis (strain ATCC 33277 / DSM 20709 / CIP 103683 / JCM 12257 / NCTC 11834 / 2561).